The following is a 305-amino-acid chain: 5'-hydroxyaverantin dehydrogenase stcG (305 aa).

Residues Ser25, Leu27, Gln48, Asp68, Tyr186, Lys190, and Ser221 each contribute to the NADP(+) site. Residue Tyr186 is the Proton acceptor of the active site. Lys190 (lowers pKa of active site Tyr) is an active-site residue.

This sequence belongs to the short-chain dehydrogenases/reductases (SDR) family.

The enzyme catalyses (1'S,5'S)-5'-hydroxyaverantin + NAD(+) = (S)-5'-oxoaverantin + NADH + H(+). The catalysed reaction is (1'S,5'R)-5'-hydroxyaverantin + NAD(+) = (S)-5'-oxoaverantin + NADH + 2 H(+). It functions in the pathway mycotoxin biosynthesis; sterigmatocystin biosynthesis. Functionally, 5'-hydroxyaverantin dehydrogenase; part of the gene cluster that mediates the biosynthesis of sterigmatocystin (ST), a polyketide-derived furanocoumarin which is part of the most toxic and carcinogenic compounds among the known mycotoxins. The first step in the biosynthesis of sterigmatocystin is the production of hexanoate by the fatty acid synthase (FAS) units stcJ and stcK. The polyketide backbone is assembled by the non-reducing polyketide synthase stcA by condensation of the starter hexanoyl-CoA and 7 malonyl-CoA extender units followed by cyclization and release of norsolorinic acid. Norsolorinic acid is the first stable intermediate in the biosynthesis of sterigmatocystin and is converted into averantin (AVN) by the ketoreductase stcE which reduces the hexanoate ketone to an alcohol. Averantin is then oxidized into 5'-hydroxyaverantin (HAVN) by the cytochrome P450 monooxygenase stcF. 5'-hydroxyaverantin is further converted to 5'-oxyaverantin (OAVN) by the 5'-hydroxyaverantin dehydrogenase stcG. The next step is the conversion of OAVN into averufin (AVF) which is catalyzed by a yet to be identified enzyme. The cytochrome P450 monooxygenase stcB and the flavin-binding monooxygenase stcW are both required for the conversion of averufin to 1-hydroxyversicolorone. The esterase stcI probably catalyzes the formation of versiconal hemiacetal acetate from 1-hydroxyversicolorone. The oxydoreductase stcN then probably catalyzes the biosynthetic step from versiconal to versicolorin B (VERB). The next step is performed by the versicolorin B desaturase stcL to produce versicolorin A (VERA). The ketoreductase stcU and the cytochrome P450 monooxygenase stcS are involved in the conversion of versicolorin A to demethylsterigmatocystin. The Baeyer-Villiger oxidas stcQ and the reductase stcR might be involved in the biosynthetic step from versicolorin A to demethylsterigmatocystin. The final step in the biosynthesis of sterigmatocystin is the methylation of demethylsterigmatocystin catalyzed by the methyltransferase stcP. This Emericella nidulans (strain FGSC A4 / ATCC 38163 / CBS 112.46 / NRRL 194 / M139) (Aspergillus nidulans) protein is 5'-hydroxyaverantin dehydrogenase stcG.